The primary structure comprises 301 residues: MRIAVLSQGPELYSTRRLVEAAKERGHEVRVINPLECYMNINMRASSIHIAGEELPIFDAVIPRIGSAITFYGCAVLRQFEMMGVYTLNESVAVTRSRDKLRSMQLMSRRGIGLPITGFANKPSDIPDLIEMVGGAPLVIKLLEGTQGIGVVLAETRKAAESVIEAFMGLKANIMVQEYIREANGADIRCFVLGDKVVAAMKRQAAPGEFRSNLHRGGSATLVKLTPEERSVAVRAAKTMGLNVAGVDLLRSNHGPLVMEVNSSPGLEGIEGATGKDVAGAIIAFIEKAAHKKPKQTGARG.

The ATP-grasp domain occupies 104 to 287; sequence MQLMSRRGIG…VAGAIIAFIE (184 aa). Residues Lys-141, 178 to 179, Asp-187, and 211 to 213 contribute to the ATP site; these read EY and RSN. Residues Asp-248, Glu-260, and Asn-262 each coordinate Mg(2+). The Mn(2+) site is built by Asp-248, Glu-260, and Asn-262.

It belongs to the RimK family. The cofactor is Mg(2+). Mn(2+) serves as cofactor.

The sequence is that of Probable alpha-L-glutamate ligase 1 from Shewanella amazonensis (strain ATCC BAA-1098 / SB2B).